We begin with the raw amino-acid sequence, 837 residues long: E3 ubiquitin-protein ligase bre-1 (837 aa).

The interval 1–33 is disordered; sequence MMKRSNEGIGGENYASSPSDDGQQKRRKIQFEP. The segment at 1-313 is interaction with ubc-1; the sequence is MMKRSNEGIG…AKEIENLRLE (313 aa). Coiled coils occupy residues 54–89 and 185–253; these read TSKL…ESNF and HKEL…KHMR. The segment at 269-302 is disordered; sequence GQSGGNGGATPSSSGTTNATEKKISAPDIPPSET. The span at 277-287 shows a compositional bias: polar residues; that stretch reads ATPSSSGTTNA. Coiled coils occupy residues 300–397, 458–651, and 677–763; these read SETA…AFRS, DEMK…KAQT, and VQFK…NESV. The RING-type zinc-finger motif lies at 785 to 824; it reads CPSCKTRPKDCIMLKCYHLFCETCIKTMYDTRQRKCPKCN.

This sequence belongs to the BRE1 family. As to quaternary structure, interacts with ubc-1. Interacts with mrg-1. In terms of tissue distribution, in adult animals, expressed in oocytes, germ cells, pharyngeal and intestinal cells.

Its subcellular location is the nucleus. The catalysed reaction is S-ubiquitinyl-[E2 ubiquitin-conjugating enzyme]-L-cysteine + [acceptor protein]-L-lysine = [E2 ubiquitin-conjugating enzyme]-L-cysteine + N(6)-ubiquitinyl-[acceptor protein]-L-lysine.. The protein operates within protein modification; protein ubiquitination. In terms of biological role, E3 ubiquitin-protein ligase that mediates monoubiquitination of 'Lys-117' of histone H2B. H2B 'Lys-117' ubiquitination gives a specific tag for epigenetic transcriptional activation and is also prerequisite for histone H3 'Lys-4' and 'Lys-79' methylation. Involved in regulating stem cell proliferative fate. In Caenorhabditis elegans, this protein is E3 ubiquitin-protein ligase bre-1 (rfp-1).